Reading from the N-terminus, the 346-residue chain is Heterogeneous nuclear ribonucleoprotein A1 (346 aa).

RRM domains are found at residues 23-123 (RKIF…GVRE) and 114-191 (KRLY…KGLS). Composition is skewed to basic and acidic residues over residues 92–107 (TVDPKRAVPRDDKNRS) and 189–215 (GLSKDEMSKAQMNRDRETRGGRSRDGQ). Disordered regions lie at residues 92–111 (TVDPKRAVPRDDKNRSESNV) and 189–346 (GLSK…NRNY). Gly residues-rich tracts occupy residues 216 to 296 (RGGY…GWGG) and 303 to 331 (GGWGGPQQGGGGGGWGGQGQQQGGWGGQS). Low complexity predominate over residues 332 to 346 (GAQQWAHAQGGNRNY).

It is found in the nucleus. It localises to the chromosome. Its subcellular location is the telomere. This protein is a component of ribonucleosomes. Overexpression gradually increases telomere length, leading to increase lifespan. The chain is Heterogeneous nuclear ribonucleoprotein A1 from Caenorhabditis elegans.